Here is a 483-residue protein sequence, read N- to C-terminus: Membrane-bound lytic murein transglycosylase F (483 aa).

The signal sequence occupies residues 1 to 18; the sequence is MKGLIARFIAGFALLLWA. The segment at 19-267 is non-LT domain; sequence WDMVFPWQQL…RIEEKYFNHL (249 aa). The LT domain stretch occupies residues 269-483; sequence HFDYVDIQSY…SKESDSTLKE (215 aa). The active site involves Glu312. Residues 459–483 are disordered; that stretch reads QIQNNEEQSSVPQEISKESDSTLKE. The span at 473–483 shows a compositional bias: basic and acidic residues; it reads ISKESDSTLKE.

In the N-terminal section; belongs to the bacterial solute-binding protein 3 family. It in the C-terminal section; belongs to the transglycosylase Slt family.

It is found in the cell outer membrane. It catalyses the reaction Exolytic cleavage of the (1-&gt;4)-beta-glycosidic linkage between N-acetylmuramic acid (MurNAc) and N-acetylglucosamine (GlcNAc) residues in peptidoglycan, from either the reducing or the non-reducing ends of the peptidoglycan chains, with concomitant formation of a 1,6-anhydrobond in the MurNAc residue.. Murein-degrading enzyme that degrades murein glycan strands and insoluble, high-molecular weight murein sacculi, with the concomitant formation of a 1,6-anhydromuramoyl product. Lytic transglycosylases (LTs) play an integral role in the metabolism of the peptidoglycan (PG) sacculus. Their lytic action creates space within the PG sacculus to allow for its expansion as well as for the insertion of various structures such as secretion systems and flagella. The polypeptide is Membrane-bound lytic murein transglycosylase F (Actinobacillus pleuropneumoniae serotype 7 (strain AP76)).